We begin with the raw amino-acid sequence, 126 residues long: Small ribosomal subunit protein uS11 (126 aa).

Belongs to the universal ribosomal protein uS11 family. In terms of assembly, part of the 30S ribosomal subunit.

Functionally, located on the platform of the 30S subunit. The sequence is that of Small ribosomal subunit protein uS11 from Methanosarcina barkeri (strain Fusaro / DSM 804).